A 422-amino-acid chain; its full sequence is Proline--tRNA ligase (422 aa).

Belongs to the class-II aminoacyl-tRNA synthetase family. ProS type 2 subfamily. Homodimer.

Its subcellular location is the cytoplasm. The catalysed reaction is tRNA(Pro) + L-proline + ATP = L-prolyl-tRNA(Pro) + AMP + diphosphate. Functionally, catalyzes the attachment of proline to tRNA(Pro) in a two-step reaction: proline is first activated by ATP to form Pro-AMP and then transferred to the acceptor end of tRNA(Pro). This Wolbachia pipientis wMel protein is Proline--tRNA ligase.